The following is a 116-amino-acid chain: Holo-[acyl-carrier-protein] synthase (116 aa).

2 residues coordinate Mg(2+): D8 and E59.

This sequence belongs to the P-Pant transferase superfamily. AcpS family. Mg(2+) serves as cofactor.

The protein resides in the cytoplasm. It catalyses the reaction apo-[ACP] + CoA = holo-[ACP] + adenosine 3',5'-bisphosphate + H(+). Its function is as follows. Transfers the 4'-phosphopantetheine moiety from coenzyme A to a Ser of acyl-carrier-protein. The chain is Holo-[acyl-carrier-protein] synthase from Staphylococcus saprophyticus subsp. saprophyticus (strain ATCC 15305 / DSM 20229 / NCIMB 8711 / NCTC 7292 / S-41).